The chain runs to 636 residues: Chaperone protein DnaK2 (636 aa).

A Phosphothreonine; by autocatalysis modification is found at T198. The span at 604 to 618 (EAGVGAPGAGPEAGT) shows a compositional bias: low complexity. The segment at 604–636 (EAGVGAPGAGPEAGTSSGGGDDVIDAEFSEPEK) is disordered. Acidic residues predominate over residues 625–636 (DVIDAEFSEPEK).

The protein belongs to the heat shock protein 70 family.

Its function is as follows. Acts as a chaperone. The protein is Chaperone protein DnaK2 (dnaK2) of Synechocystis sp. (strain ATCC 27184 / PCC 6803 / Kazusa).